Reading from the N-terminus, the 190-residue chain is Elongation factor P-like protein (190 aa).

Belongs to the elongation factor P family.

This is Elongation factor P-like protein from Shigella boydii serotype 4 (strain Sb227).